Consider the following 216-residue polypeptide: Adenylate kinase (216 aa).

Residue 10–15 (GAGKGT) coordinates ATP. An NMP region spans residues 30 to 59 (STGDIFRANIKEKTPLGIEAKRYIDNGQLV). AMP is bound by residues threonine 31, arginine 36, 57-59 (QLV), 85-88 (GFPR), and glutamine 92. Positions 126 to 163 (GRRVCTSCGASYHIRFNPPKIEGKCDICDNELIQRKDD) are LID. Arginine 127 is an ATP binding site. Residues cysteine 130 and cysteine 133 each coordinate Zn(2+). 136–137 (SY) is an ATP binding site. Zn(2+) is bound by residues cysteine 150 and cysteine 153. Positions 160 and 171 each coordinate AMP. ATP is bound at residue glutamate 199.

This sequence belongs to the adenylate kinase family. In terms of assembly, monomer.

The protein resides in the cytoplasm. The catalysed reaction is AMP + ATP = 2 ADP. Its pathway is purine metabolism; AMP biosynthesis via salvage pathway; AMP from ADP: step 1/1. In terms of biological role, catalyzes the reversible transfer of the terminal phosphate group between ATP and AMP. Plays an important role in cellular energy homeostasis and in adenine nucleotide metabolism. The protein is Adenylate kinase of Clostridium botulinum (strain Langeland / NCTC 10281 / Type F).